A 439-amino-acid polypeptide reads, in one-letter code: Glutamate--tRNA ligase 2 (439 aa).

The 'HIGH' region signature appears at 6–16 (PSPTGDMHIGN). Positions 232–236 (KMSKR) match the 'KMSKS' region motif. Residue K235 participates in ATP binding.

This sequence belongs to the class-I aminoacyl-tRNA synthetase family. Glutamate--tRNA ligase type 1 subfamily. As to quaternary structure, monomer.

It is found in the cytoplasm. The catalysed reaction is tRNA(Glu) + L-glutamate + ATP = L-glutamyl-tRNA(Glu) + AMP + diphosphate. Its function is as follows. Catalyzes the attachment of glutamate to tRNA(Glu) in a two-step reaction: glutamate is first activated by ATP to form Glu-AMP and then transferred to the acceptor end of tRNA(Glu). The protein is Glutamate--tRNA ligase 2 of Helicobacter pylori (strain P12).